We begin with the raw amino-acid sequence, 218 residues long: Thiopurine S-methyltransferase (218 aa).

Residues Trp-10, Leu-45, Glu-66, and Arg-123 each coordinate S-adenosyl-L-methionine.

The protein belongs to the class I-like SAM-binding methyltransferase superfamily. TPMT family.

The protein resides in the cytoplasm. It catalyses the reaction S-adenosyl-L-methionine + a thiopurine = S-adenosyl-L-homocysteine + a thiopurine S-methylether.. This Shewanella baltica (strain OS155 / ATCC BAA-1091) protein is Thiopurine S-methyltransferase.